A 506-amino-acid chain; its full sequence is Protein NEN3 (506 aa).

The region spanning 15 to 176 (FFDLETAVPT…LDDVRMNLEV (162 aa)) is the Exonuclease domain. The Mg(2+) site is built by Asp-17 and Glu-19. Catalysis depends on His-164, which acts as the Proton donor/acceptor. Position 169 (Asp-169) interacts with Mg(2+). Disordered stretches follow at residues 204 to 240 (KSPRTRSNGKLVANGVRESSTSSSSSPKTDPSSSSVD) and 289 to 313 (AEEAKTVRQQDESPPSPDSDAKDES). The segment covering 222–238 (SSTSSSSSPKTDPSSSS) has biased composition (low complexity). Over residues 290 to 299 (EEAKTVRQQD) the composition is skewed to basic and acidic residues.

Mg(2+) serves as cofactor.

Probable exonuclease that may be involved in enuclation of sieve elements. In Arabidopsis thaliana (Mouse-ear cress), this protein is Protein NEN3 (NEN3).